Consider the following 464-residue polypeptide: Cystathionine beta-lyase, chloroplastic (464 aa).

A chloroplast-targeting transit peptide spans 1–55; it reads MTSSLSLHSSFVPSFADLSDRGLISKNSPTSVSISKVPTWEKKQISNRNSFKLNC. Residues Tyr-127, Arg-129, Gly-157, Met-158, Ser-275, and Thr-277 each coordinate pyridoxal 5'-phosphate. Residue Lys-278 is modified to N6-(pyridoxal phosphate)lysine.

This sequence belongs to the trans-sulfuration enzymes family. As to quaternary structure, forms homodimers. May form homotetramers from two homodimers. Requires pyridoxal 5'-phosphate as cofactor.

It is found in the plastid. The protein localises to the chloroplast. The enzyme catalyses L,L-cystathionine + H2O = L-homocysteine + pyruvate + NH4(+). It carries out the reaction an S-substituted L-cysteine + H2O = a thiol + pyruvate + NH4(+). It functions in the pathway amino-acid biosynthesis; L-methionine biosynthesis via de novo pathway; L-homocysteine from L-cystathionine: step 1/1. In terms of biological role, catalyzes the penultimate step in the de novo biosynthesis of methionine. Its role in methionine metabolism may affect plant development in different organs, probably by modifying plant auxin transport. Its cysteine desulfhydrase activity may be involved in hydrogen sulfur production using L-cysteine as a substrate. The protein is Cystathionine beta-lyase, chloroplastic of Arabidopsis thaliana (Mouse-ear cress).